We begin with the raw amino-acid sequence, 514 residues long: Type-2 serine--tRNA ligase (514 aa).

A313 provides a ligand contact to L-serine. C315 lines the Zn(2+) pocket. R344 lines the L-serine pocket. ATP contacts are provided by residues 344 to 346 (RWE) and 355 to 356 (RV). 361 to 363 (RGE) lines the L-serine pocket. Zn(2+)-binding residues include E363 and C470. R477 serves as a coordination point for ATP.

This sequence belongs to the class-II aminoacyl-tRNA synthetase family. Type-2 seryl-tRNA synthetase subfamily. In terms of assembly, homodimer. It depends on Zn(2+) as a cofactor.

Its subcellular location is the cytoplasm. The catalysed reaction is tRNA(Ser) + L-serine + ATP = L-seryl-tRNA(Ser) + AMP + diphosphate + H(+). It catalyses the reaction tRNA(Sec) + L-serine + ATP = L-seryl-tRNA(Sec) + AMP + diphosphate + H(+). It participates in aminoacyl-tRNA biosynthesis; selenocysteinyl-tRNA(Sec) biosynthesis; L-seryl-tRNA(Sec) from L-serine and tRNA(Sec): step 1/1. Its function is as follows. Catalyzes the attachment of serine to tRNA(Ser). Is also able to aminoacylate tRNA(Sec) with serine, to form the misacylated tRNA L-seryl-tRNA(Sec), which will be further converted into selenocysteinyl-tRNA(Sec). The sequence is that of Type-2 serine--tRNA ligase from Methanococcus maripaludis (strain C7 / ATCC BAA-1331).